Consider the following 481-residue polypeptide: ATP synthase subunit beta (481 aa).

154-161 (GGAGVGKT) is an ATP binding site.

It belongs to the ATPase alpha/beta chains family. As to quaternary structure, F-type ATPases have 2 components, CF(1) - the catalytic core - and CF(0) - the membrane proton channel. CF(1) has five subunits: alpha(3), beta(3), gamma(1), delta(1), epsilon(1). CF(0) has three main subunits: a(1), b(2) and c(9-12). The alpha and beta chains form an alternating ring which encloses part of the gamma chain. CF(1) is attached to CF(0) by a central stalk formed by the gamma and epsilon chains, while a peripheral stalk is formed by the delta and b chains.

The protein localises to the cell inner membrane. The catalysed reaction is ATP + H2O + 4 H(+)(in) = ADP + phosphate + 5 H(+)(out). Its function is as follows. Produces ATP from ADP in the presence of a proton gradient across the membrane. The catalytic sites are hosted primarily by the beta subunits. In Novosphingobium aromaticivorans (strain ATCC 700278 / DSM 12444 / CCUG 56034 / CIP 105152 / NBRC 16084 / F199), this protein is ATP synthase subunit beta.